We begin with the raw amino-acid sequence, 246 residues long: 4-hydroxy-tetrahydrodipicolinate reductase (246 aa).

7–12 (GCSGRM) lines the NAD(+) pocket. Arg-34 contacts NADP(+). NAD(+) is bound by residues 76-78 (ATT) and 102-105 (CPNT). His-135 serves as the catalytic Proton donor/acceptor. His-136 serves as a coordination point for (S)-2,3,4,5-tetrahydrodipicolinate. Lys-139 (proton donor) is an active-site residue. 145-146 (GT) is a binding site for (S)-2,3,4,5-tetrahydrodipicolinate.

This sequence belongs to the DapB family.

The protein localises to the cytoplasm. It catalyses the reaction (S)-2,3,4,5-tetrahydrodipicolinate + NAD(+) + H2O = (2S,4S)-4-hydroxy-2,3,4,5-tetrahydrodipicolinate + NADH + H(+). It carries out the reaction (S)-2,3,4,5-tetrahydrodipicolinate + NADP(+) + H2O = (2S,4S)-4-hydroxy-2,3,4,5-tetrahydrodipicolinate + NADPH + H(+). It functions in the pathway amino-acid biosynthesis; L-lysine biosynthesis via DAP pathway; (S)-tetrahydrodipicolinate from L-aspartate: step 4/4. Catalyzes the conversion of 4-hydroxy-tetrahydrodipicolinate (HTPA) to tetrahydrodipicolinate. The chain is 4-hydroxy-tetrahydrodipicolinate reductase from Chlamydia felis (strain Fe/C-56) (Chlamydophila felis).